Consider the following 160-residue polypeptide: Cyclic pyranopterin monophosphate synthase (160 aa).

Residues 75–77 (LCH) and 113–114 (ME) each bind substrate. Residue D128 is part of the active site.

The protein belongs to the MoaC family. As to quaternary structure, homohexamer; trimer of dimers.

It catalyses the reaction (8S)-3',8-cyclo-7,8-dihydroguanosine 5'-triphosphate = cyclic pyranopterin phosphate + diphosphate. Its pathway is cofactor biosynthesis; molybdopterin biosynthesis. In terms of biological role, catalyzes the conversion of (8S)-3',8-cyclo-7,8-dihydroguanosine 5'-triphosphate to cyclic pyranopterin monophosphate (cPMP). The sequence is that of Cyclic pyranopterin monophosphate synthase from Ruthia magnifica subsp. Calyptogena magnifica.